The primary structure comprises 635 residues: Kelch-like protein 31 (635 aa).

Residues cysteine 74–leucine 138 enclose the BTB domain. A BACK domain is found at cysteine 173 to glutamine 274. Kelch repeat units follow at residues valine 318–glycine 366, phenylalanine 367–glycine 420, leucine 421–glycine 467, isoleucine 469–aspartate 514, alanine 516–asparagine 566, and lysine 567–isoleucine 615.

In terms of tissue distribution, strongly expressed in fast skeletal muscle, and weakly in heart. Not expressed in other tissues.

This chain is Kelch-like protein 31 (klhl31), found in Danio rerio (Zebrafish).